Consider the following 181-residue polypeptide: Large ribosomal subunit protein uL5 (181 aa).

This sequence belongs to the universal ribosomal protein uL5 family. As to quaternary structure, part of the 50S ribosomal subunit; contacts the 5S rRNA and probably tRNA. Forms a bridge to the 30S subunit in the 70S ribosome.

This is one of the proteins that bind and probably mediate the attachment of the 5S RNA into the large ribosomal subunit, where it forms part of the central protuberance. In the 70S ribosome it contacts protein S13 of the 30S subunit (bridge B1b), connecting the 2 subunits; this bridge is implicated in subunit movement. May contact the P site tRNA; the 5S rRNA and some of its associated proteins might help stabilize positioning of ribosome-bound tRNAs. This Methanococcus maripaludis (strain C7 / ATCC BAA-1331) protein is Large ribosomal subunit protein uL5.